The chain runs to 261 residues: (3R)-3-hydroxyacyl-CoA dehydrogenase (261 aa).

NAD(+) is bound by residues 15 to 23 (LVTGAGSGI) and 42 to 43 (DL). Phosphoserine is present on serine 60. NAD(+) is bound at residue 74-76 (ADV). Serine 156 lines the substrate pocket. An N6-succinyllysine modification is found at lysine 160. The active-site Proton acceptor is the tyrosine 169. NAD(+)-binding positions include 169–173 (YAASK) and 202–204 (IAT). Lysine 173 is subject to N6-succinyllysine.

Belongs to the short-chain dehydrogenases/reductases (SDR) family. In terms of assembly, heterotetramer with CBR4; contains two molecules of HSD17B8 and CBR4. In terms of tissue distribution, widely expressed, particularly abundant in prostate, placenta and kidney. Expressed at protein level in various tissues like brain, cerebellum, heart, lung, kidney, ovary, testis, adrenals and prostate.

It is found in the mitochondrion matrix. The catalysed reaction is a (3R)-3-hydroxyacyl-CoA + NAD(+) = a 3-oxoacyl-CoA + NADH + H(+). It carries out the reaction 17beta-estradiol + NAD(+) = estrone + NADH + H(+). It catalyses the reaction testosterone + NAD(+) = androst-4-ene-3,17-dione + NADH + H(+). The enzyme catalyses 17beta-hydroxy-5alpha-androstan-3-one + NAD(+) = 5alpha-androstan-3,17-dione + NADH + H(+). It functions in the pathway steroid biosynthesis; estrogen biosynthesis. The protein operates within lipid metabolism; fatty acid biosynthesis. It participates in lipid metabolism; mitochondrial fatty acid beta-oxidation. Its function is as follows. Required for the solubility and assembly of the heterotetramer 3-ketoacyl-[acyl carrier protein] (ACP) reductase functional complex (KAR or KAR1) that forms part of the mitochondrial fatty acid synthase (mtFAS). Alpha-subunit of the KAR complex that acts as a scaffold protein required for the stability of carbonyl reductase type-4 (CBR4, beta-subunit of the KAR complex) and for its 3-ketoacyl-ACP reductase activity, thereby participating in mitochondrial fatty acid biosynthesis. Catalyzes the NAD-dependent conversion of (3R)-3-hydroxyacyl-CoA into 3-ketoacyl-CoA (3-oxoacyl-CoA) with no chain length preference; this enzymatic activity is not needed for the KAR function. Prefers (3R)-3-hydroxyacyl-CoA over (3S)-3-hydroxyacyl-CoA and displays enzymatic activity only in the presence of NAD(+). Cooperates with enoyl-CoA hydratase 1 in mitochondria, together they constitute an alternative route to the auxiliary enzyme pathways for the breakdown of Z-PUFA (cis polyunsaturated fatty acid) enoyl-esters. NAD-dependent 17-beta-hydroxysteroid dehydrogenase with highest activity towards estradiol (17beta-estradiol or E2). Has very low activity towards testosterone and dihydrotestosterone (17beta-hydroxy-5alpha-androstan-3-one). Primarily an oxidative enzyme, it can switch to a reductive mode determined in the appropriate physiologic milieu and catalyze the reduction of estrone (E1) to form biologically active 17beta-estradiol. The chain is (3R)-3-hydroxyacyl-CoA dehydrogenase (HSD17B8) from Homo sapiens (Human).